The following is a 127-amino-acid chain: Large ribosomal subunit protein eL32 (127 aa).

The span at 37-48 shows a compositional bias: basic and acidic residues; that stretch reads KWRKPKGTDSKM. The interval 37-65 is disordered; it reads KWRKPKGTDSKMRVKLKGKARSPSIGWSS.

This sequence belongs to the eukaryotic ribosomal protein eL32 family.

This Thermococcus sibiricus (strain DSM 12597 / MM 739) protein is Large ribosomal subunit protein eL32.